The following is a 265-amino-acid chain: MPLIRVLASLLILQLSYGKSLDNGAKAITSLDRIIGGFECNPSEHRSLVYLYNSAGFFCSGTLLNHEWVLTAAHCNREDIQIRLGVHNVHVHYEDEQIRVPKEKLCCLSTNNCTQFSQDIMLIRLNSPVNYSEHIAPLSLPSNPPSMGSVCCVMGWGTITSPEVTYPEVPHCVDINILHIPVCQAAYPTMSGKNILCAGILEGGKDSCKGDSGGPLICNGQIQGIVSWGRFPCAQFLEPGIYTKVFDYKDWIEGIIAGNSNVICP.

The first 18 residues, 1–18, serve as a signal peptide directing secretion; that stretch reads MPLIRVLASLLILQLSYG. A propeptide spanning residues 19-33 is cleaved from the precursor; the sequence is KSLDNGAKAITSLDR. One can recognise a Peptidase S1 domain in the interval 34 to 257; the sequence is IIGGFECNPS…YKDWIEGIIA (224 aa). Intrachain disulfides connect C40–C172, C59–C75, C106–C152, C107–C264, C151–C218, C183–C197, and C208–C233. H74 acts as the Charge relay system in catalysis. A glycan (N-linked (GlcNAc...) asparagine) is linked at N112. The active-site Charge relay system is D119. The N-linked (GlcNAc...) asparagine glycan is linked to N130. S212 functions as the Charge relay system in the catalytic mechanism.

It belongs to the peptidase S1 family. Snake venom subfamily. Monomer. In terms of processing, harobin contains three additional Cys residues than other snake venom serine proteases, suggesting an additional disulfide bond. In addition, it is more stable than other snake 6-disulfide-bond serine proteases, since it is less sensitive to DTT. As to expression, expressed by the venom gland.

It is found in the secreted. With respect to regulation, inhibited by PMSF. In terms of biological role, serine protein with fibrinolytic and fibrinogenolytic activities. Degrades Bbeta-chain (FGB) of fibrinogen first and then the Aalpha-chain (FGA). Gamma-chain (FGG) are also digested on prolonged incubation. In vitro, it cleaves high molecular weight (HMW) kininogen (KNG) releasing bradykinin that promotes vasodilation. In vitro and in vivo, it cleaves angiotensin-2 (AGT). This explains the reduction of blood pressure in hypertensive rats. Also has antithrombotic effects on thrombosis animal models. This chain is Serine protease harobin, found in Hydrophis hardwickii (Hardwick's spine-bellied seasnake).